Reading from the N-terminus, the 213-residue chain is Large ribosomal subunit protein uL1 (213 aa).

The protein belongs to the universal ribosomal protein uL1 family. As to quaternary structure, part of the 50S ribosomal subunit.

Binds directly to 23S rRNA. Probably involved in E site tRNA release. In terms of biological role, protein L1 is also a translational repressor protein, it controls the translation of its operon by binding to its mRNA. This Methanococcus maripaludis (strain DSM 14266 / JCM 13030 / NBRC 101832 / S2 / LL) protein is Large ribosomal subunit protein uL1.